An 877-amino-acid chain; its full sequence is DNA polymerase I (877 aa).

The 5'-3' exonuclease domain occupies 177 to 270 (TPAQFIDLKA…LEDLVYSGPD (94 aa)). The 3'-5' exonuclease domain occupies 302–465 (DFTIVDQISQ…TEPILLEKLS (164 aa)).

The protein belongs to the DNA polymerase type-A family. Single-chain monomer with multiple functions.

It catalyses the reaction DNA(n) + a 2'-deoxyribonucleoside 5'-triphosphate = DNA(n+1) + diphosphate. In addition to polymerase activity, this DNA polymerase exhibits 3'-5' and 5'-3' exonuclease activity. This chain is DNA polymerase I (polA), found in Streptococcus pneumoniae serotype 4 (strain ATCC BAA-334 / TIGR4).